The following is a 244-amino-acid chain: tRNA pseudouridine synthase A (244 aa).

The Nucleophile role is filled by Asp-52. Tyr-110 contacts substrate.

The protein belongs to the tRNA pseudouridine synthase TruA family. In terms of assembly, homodimer.

It carries out the reaction uridine(38/39/40) in tRNA = pseudouridine(38/39/40) in tRNA. Formation of pseudouridine at positions 38, 39 and 40 in the anticodon stem and loop of transfer RNAs. This Pelobacter propionicus (strain DSM 2379 / NBRC 103807 / OttBd1) protein is tRNA pseudouridine synthase A.